The chain runs to 271 residues: Pyridoxine kinase (271 aa).

Asn-141 is an ATP binding site. Glu-144 contributes to the Mg(2+) binding site. ATP-binding positions include 178–182, Asp-190, Ile-206, Gly-215, and Lys-240; that span reads TGGGK.

This sequence belongs to the ThiD family. As to quaternary structure, homodimer.

It carries out the reaction pyridoxal + ATP = pyridoxal 5'-phosphate + ADP + H(+). In terms of biological role, phosphorylates B6 vitamers; functions in a salvage pathway. Uses pyridoxal, pyridoxine, and pyridoxamine as substrates. Can also use hydroxymethylpyrimidine (HMP) as substrate. The protein is Pyridoxine kinase (pdxK) of Bacillus subtilis (strain 168).